Consider the following 165-residue polypeptide: Pro-MCH (165 aa).

Positions 1-21 (MAKMSLSSYMLMLAFSLFSHG) are cleaved as a signal peptide. Basic and acidic residues predominate over residues 69-82 (DESGFMKDDDDKTT). Positions 69–89 (DESGFMKDDDDKTTKNTGSKQ) are disordered. The residue at position 143 (isoleucine 143) is an Isoleucine amide. A disulfide bridge links cysteine 153 with cysteine 162.

The protein belongs to the melanin-concentrating hormone family. Pro-MCH is processed differentially in the brain and in peripheral organs producing two neuropeptides; NEI and MCH. A third peptide, NGE, may also be produced. Preferential processing in neurons by prohormone convertase 2 (PC2) generates NEI. MCH is generated in neurons of the lateral hypothalmic area by several prohormone convertases including PC1/3, PC2 and PC5/6. In terms of tissue distribution, MCH is present in all regions of the brain and in neurointermediate lobe of the pituarity gland, with highest concentrations in the hypothalamus. Also expressed to a much lesser extent in stomach, lamina propria of both duodenum and colon, ovary, thymus, pancreas, adrenal gland and testis (spermatogonia, early spermatocytes and Sertoli cells). Weak expression in heart and lung. The other peptides are expressed at least in Sertoli cells, nei being also expressed in brain, stomach and proximal duodenum. In brain exclusively mature mch and nei peptides are present. In peripheral tissues a large product, encompassing the NEI and MCH domains of the precursor, is found predominantly. At low levels fully processed MCH and NEI peptides are present in gut. No expression in peripheral blood.

The protein localises to the secreted. Its function is as follows. MCH inhibits ACTH secretion at the end of the light on period which corresponds to the peak of the circadian rhythm in ACTH. Inhibits also stress induced ACTH release during the light off period of the cycle. Involved as a neurotransmitter or neuromodulator in a broad array of neuronal functions. Stimulates sexual behavior when injected into the ventromedial nucleus, this effect is antagonized by NEI. In the medial preoptic area, stimulates anxiety and sexual behavior. Antagonizes inhibitory effect of melanotropin alpha on exploration behavior. Functionally, NEI can influence differentiation of neuronal processes in brain neurons. Affects the content of neurofilament protein in neuritogenesis (in vitro). May also be a neuromodulatory factor. In behavioral tests, it stimulates exploration and anxiety when injected into the ventromedial nucleus. Also stimulates grooming, locomotion and rearing. May antagonize the inhibitory effect of mch on ACTH release. Reduces dopamine and dopac release in the ventromedial nucleus. The polypeptide is Pro-MCH (Pmch) (Rattus norvegicus (Rat)).